An 82-amino-acid polypeptide reads, in one-letter code: Small ribosomal subunit protein bS16 (82 aa).

The protein belongs to the bacterial ribosomal protein bS16 family.

This chain is Small ribosomal subunit protein bS16, found in Actinobacillus succinogenes (strain ATCC 55618 / DSM 22257 / CCUG 43843 / 130Z).